An 878-amino-acid chain; its full sequence is Alanine--tRNA ligase (878 aa).

Residues His-568, His-572, Cys-669, and His-673 each contribute to the Zn(2+) site.

The protein belongs to the class-II aminoacyl-tRNA synthetase family. Requires Zn(2+) as cofactor.

The protein localises to the cytoplasm. The catalysed reaction is tRNA(Ala) + L-alanine + ATP = L-alanyl-tRNA(Ala) + AMP + diphosphate. Its function is as follows. Catalyzes the attachment of alanine to tRNA(Ala) in a two-step reaction: alanine is first activated by ATP to form Ala-AMP and then transferred to the acceptor end of tRNA(Ala). Also edits incorrectly charged Ser-tRNA(Ala) and Gly-tRNA(Ala) via its editing domain. The protein is Alanine--tRNA ligase of Polaromonas sp. (strain JS666 / ATCC BAA-500).